The primary structure comprises 470 residues: Cannabinoid receptor type 1B (470 aa).

Topologically, residues 1–113 (MKLALHRIAG…CFMILTPAQQ (113 aa)) are extracellular. N-linked (GlcNAc...) asparagine glycosylation is found at Asn-78 and Asn-86. A helical membrane pass occupies residues 114-139 (LVIVILAITLGTFTVLENFVVLCVIL). The Cytoplasmic segment spans residues 140–151 (HSHTLRSRPSYH). The chain crosses the membrane as a helical span at residues 152 to 172 (FIGSLAVADLIGSIIFVYSFL). Residues 173–184 (DFHVLHRKDSPS) are Extracellular-facing. A helical transmembrane segment spans residues 185-209 (IFLFKLAGVIASFTASVGSLFLTAI). Topologically, residues 210 to 229 (DRYVSIHRPMAYKRIITKTK) are cytoplasmic. The helical transmembrane segment at 230–252 (AVIAFSVMWAISIEFSLLPLLGW) threads the bilayer. Over 253 to 270 (NCKRLHSVCSDIFPLIDE) the chain is Extracellular. The chain crosses the membrane as a helical span at residues 271-296 (KYLMFWIGMTTVLLLFIIYAYMFILW). Residues 297–341 (KSHHHAVRMLSRSSQRSIIVYTSEGTKVQTVRPEQARMDLRLAKT) lie on the Cytoplasmic side of the membrane. A helical transmembrane segment spans residues 342–362 (LVLILVALIICWGPLLAIMVY). The Extracellular portion of the chain corresponds to 363-374 (DLFGRVNDFIKT). Residues 375 to 396 (VFAFCSMLCLLNSTINPVIYAM) traverse the membrane as a helical segment. At 397–470 (RSKDLRRAFV…VTASSPAEAV (74 aa)) the chain is on the cytoplasmic side. Cys-412 carries the S-palmitoyl cysteine lipid modification. The segment covering 418-434 (SLDSSAESDWNSRSVRS) has biased composition (polar residues). The disordered stretch occupies residues 418 to 450 (SLDSSAESDWNSRSVRSTGGRAGKDRSVGGKPQ).

The protein belongs to the G-protein coupled receptor 1 family. Palmitoylation at Cys-412 is important for recruitment at both plasma membrane and lipid rafts and association with G protein alpha subunits.

The protein localises to the cell membrane. The protein resides in the mitochondrion outer membrane. It is found in the cell projection. It localises to the axon. Its subcellular location is the presynapse. G-protein coupled receptor for cannabinoids. Mediates many cannabinoid-induced effects in the central nervous system (CNS), as well as in peripheral tissues. Regulates cellular respiration and energy production in response to cannabinoids. Signaling typically involves reduction in cyclic AMP. This Takifugu rubripes (Japanese pufferfish) protein is Cannabinoid receptor type 1B (cnr1b).